A 988-amino-acid polypeptide reads, in one-letter code: Transcriptional regulator of yeast form adherence 5 (988 aa).

2 consecutive C2H2-type zinc fingers follow at residues 7–29 and 35–59; these read YICA…ERSH and FHCL…TVHH. A compositionally biased stretch (polar residues) spans 59-83; the sequence is HTNLNPSTLPSNKSLKNPTTNPLDL. 2 disordered regions span residues 59–129 and 174–229; these read HTNL…SSVG and SMES…SNNN. Residues 84-106 show a composition bias toward low complexity; it reads SNNEGTTTTTKTGNRKNNSNKNG. Polar residues-rich tracts occupy residues 113–129 and 174–208; these read TNPN…SSVG and SMES…EIVL.

The protein resides in the nucleus. Transcription factor required for yeast cell adherence to silicone substrate. This chain is Transcriptional regulator of yeast form adherence 5 (TRY5), found in Candida albicans (strain SC5314 / ATCC MYA-2876) (Yeast).